Reading from the N-terminus, the 258-residue chain is Imidazole glycerol phosphate synthase subunit HisF (258 aa).

Catalysis depends on residues Asp11 and Asp130.

This sequence belongs to the HisA/HisF family. Heterodimer of HisH and HisF.

It is found in the cytoplasm. The enzyme catalyses 5-[(5-phospho-1-deoxy-D-ribulos-1-ylimino)methylamino]-1-(5-phospho-beta-D-ribosyl)imidazole-4-carboxamide + L-glutamine = D-erythro-1-(imidazol-4-yl)glycerol 3-phosphate + 5-amino-1-(5-phospho-beta-D-ribosyl)imidazole-4-carboxamide + L-glutamate + H(+). The protein operates within amino-acid biosynthesis; L-histidine biosynthesis; L-histidine from 5-phospho-alpha-D-ribose 1-diphosphate: step 5/9. IGPS catalyzes the conversion of PRFAR and glutamine to IGP, AICAR and glutamate. The HisF subunit catalyzes the cyclization activity that produces IGP and AICAR from PRFAR using the ammonia provided by the HisH subunit. The protein is Imidazole glycerol phosphate synthase subunit HisF of Bradyrhizobium sp. (strain BTAi1 / ATCC BAA-1182).